Reading from the N-terminus, the 185-residue chain is dTTP/UTP pyrophosphatase (185 aa).

The Proton acceptor role is filled by Asp-64.

Belongs to the Maf family. YhdE subfamily. A divalent metal cation serves as cofactor.

Its subcellular location is the cytoplasm. It carries out the reaction dTTP + H2O = dTMP + diphosphate + H(+). The enzyme catalyses UTP + H2O = UMP + diphosphate + H(+). In terms of biological role, nucleoside triphosphate pyrophosphatase that hydrolyzes dTTP and UTP. May have a dual role in cell division arrest and in preventing the incorporation of modified nucleotides into cellular nucleic acids. In Thermococcus gammatolerans (strain DSM 15229 / JCM 11827 / EJ3), this protein is dTTP/UTP pyrophosphatase.